Reading from the N-terminus, the 384-residue chain is Methylthioribose-1-phosphate isomerase (384 aa).

Catalysis depends on Asp-255, which acts as the Proton donor.

Belongs to the eIF-2B alpha/beta/delta subunits family. MtnA subfamily.

It is found in the cytoplasm. Its subcellular location is the nucleus. It catalyses the reaction 5-(methylsulfanyl)-alpha-D-ribose 1-phosphate = 5-(methylsulfanyl)-D-ribulose 1-phosphate. It functions in the pathway amino-acid biosynthesis; L-methionine biosynthesis via salvage pathway; L-methionine from S-methyl-5-thio-alpha-D-ribose 1-phosphate: step 1/6. In terms of biological role, catalyzes the interconversion of methylthioribose-1-phosphate (MTR-1-P) into methylthioribulose-1-phosphate (MTRu-1-P). The chain is Methylthioribose-1-phosphate isomerase (mri1) from Talaromyces stipitatus (strain ATCC 10500 / CBS 375.48 / QM 6759 / NRRL 1006) (Penicillium stipitatum).